The primary structure comprises 634 residues: Threonine--tRNA ligase (634 aa).

In terms of domain architecture, TGS spans 1–61; the sequence is MINITLPDGS…DHDASLRIIT (61 aa). The catalytic stretch occupies residues 243-534; it reads DHRRIGKAQD…LIEHHAGAFP (292 aa). The Zn(2+) site is built by Cys-334, His-385, and His-511.

It belongs to the class-II aminoacyl-tRNA synthetase family. Homodimer. The cofactor is Zn(2+).

It localises to the cytoplasm. The catalysed reaction is tRNA(Thr) + L-threonine + ATP = L-threonyl-tRNA(Thr) + AMP + diphosphate + H(+). Its function is as follows. Catalyzes the attachment of threonine to tRNA(Thr) in a two-step reaction: L-threonine is first activated by ATP to form Thr-AMP and then transferred to the acceptor end of tRNA(Thr). Also edits incorrectly charged L-seryl-tRNA(Thr). The sequence is that of Threonine--tRNA ligase from Xanthomonas euvesicatoria pv. vesicatoria (strain 85-10) (Xanthomonas campestris pv. vesicatoria).